Consider the following 326-residue polypeptide: Ficolin-1 (326 aa).

An N-terminal signal peptide occupies residues 1–29; the sequence is MELSRVAVALGPTGQLLLFLSFQTLAAQA. A Collagen-like domain is found at 55 to 93; the sequence is GLPGAAGPKGEAGANGPKGERGSPGVVGKAGPAGPKGDR. Low complexity-rich tracts occupy residues 61–71 and 78–89; these read GPKGEAGANGP and PGVVGKAGPAGP. The tract at residues 61–110 is disordered; sequence GPKGEAGANGPKGERGSPGVVGKAGPAGPKGDRGEKGARGEKGEPGQLQS. Residues 90–104 are compositionally biased toward basic and acidic residues; it reads KGDRGEKGARGEKGE. A Fibrinogen C-terminal domain is found at 109–326; sequence QSCATGPRTC…QVSEMKVRLT (218 aa). Cystine bridges form between Cys111/Cys139 and Cys118/Cys146. The interval 115–154 is a domain; contributes to trimerization; it reads PRTCKELLTRGHFLSGWHTIYLPDCQPLTVLCDMDTDGGG. Positions 155–243 are b domain; contributes to trimerization; it reads WTVFQRRSDG…LVLGGFLEGN (89 aa). Residues Asp262 and Asp264 each coordinate Ca(2+). A glycan (N-linked (GlcNAc...) asparagine) is linked at Asn265. An intrachain disulfide couples Cys270 to Cys283. 282-284 lines the a carbohydrate pocket; sequence ACH. Residue Asn313 is glycosylated (N-linked (GlcNAc...) asparagine). Residues 317 to 326 form a p domain region; sequence QVSEMKVRLT.

The protein belongs to the ficolin lectin family. In terms of assembly, homotrimer. Interacts with elastin/ELN. Interacts (via Fibrinogen C-terminal domain) with FFAR2. Interacts with CRP; may regulate monocyte activation by FCN1. As to expression, most abundantly expressed in placenta and lung.

The protein resides in the secreted. It is found in the cell membrane. Functionally, extracellular lectin functioning as a pattern-recognition receptor in innate immunity. Binds the sugar moieties of pathogen-associated molecular patterns (PAMPs) displayed on microbes and activates the lectin pathway of the complement system. May also activate monocytes through a G protein-coupled receptor, FFAR2, inducing the secretion of interleukin-8/IL-8. Binds preferentially to 9-O-acetylated 2-6-linked sialic acid derivatives and to various glycans containing sialic acid engaged in a 2-3 linkage. The protein is Ficolin-1 (FCN1) of Sus scrofa (Pig).